A 78-amino-acid polypeptide reads, in one-letter code: Large ribosomal subunit protein bL28 (78 aa).

The segment at M1 to K22 is disordered.

The protein belongs to the bacterial ribosomal protein bL28 family.

The sequence is that of Large ribosomal subunit protein bL28 from Teredinibacter turnerae (strain ATCC 39867 / T7901).